We begin with the raw amino-acid sequence, 312 residues long: Malate dehydrogenase (312 aa).

Residues Gly7–Gly13 and Asp34 each bind NAD(+). Residues Arg81 and Arg87 each coordinate substrate. Residues Asn94 and Ile117–Asn119 contribute to the NAD(+) site. Substrate is bound by residues Asn119 and Arg153. His177 functions as the Proton acceptor in the catalytic mechanism. Met227 lines the NAD(+) pocket.

The protein belongs to the LDH/MDH superfamily. MDH type 1 family. As to quaternary structure, homodimer.

The catalysed reaction is (S)-malate + NAD(+) = oxaloacetate + NADH + H(+). In terms of biological role, catalyzes the reversible oxidation of malate to oxaloacetate. This Escherichia coli O6:K15:H31 (strain 536 / UPEC) protein is Malate dehydrogenase.